A 91-amino-acid chain; its full sequence is Progonadoliberin-1 (91 aa).

A signal peptide spans 1–23 (MEPIPKLLAGLLLLTLCVVGCSS). Gln-24 is modified (pyrrolidone carboxylic acid). The residue at position 33 (Gly-33) is a Glycine amide.

The protein belongs to the GnRH family. In terms of processing, the precursor is cleaved by ACE, which removes the Gly-Lys-Arg peptide at the C-terminus, leading to mature hormone. The mature form of Gonadoliberin-1 is also cleaved and degraded by ACE.

The protein resides in the secreted. Stimulates the secretion of gonadotropins; it stimulates the secretion of both luteinizing and follicle-stimulating hormones. This is Progonadoliberin-1 (GNRH1) from Sus scrofa (Pig).